Here is a 414-residue protein sequence, read N- to C-terminus: 3-oxo-tetronate kinase (414 aa).

ATP is bound by residues Ser-255, Gly-355–Thr-358, and Gly-398.

It belongs to the four-carbon acid sugar kinase family.

It catalyses the reaction 3-dehydro-L-erythronate + ATP = 3-dehydro-4-O-phospho-L-erythronate + ADP + H(+). It carries out the reaction 3-dehydro-D-erythronate + ATP = 3-dehydro-4-O-phospho-D-erythronate + ADP + H(+). Functionally, catalyzes the ATP-dependent phosphorylation of 3-oxo-tetronate to 3-oxo-tetronate 4-phosphate. This Actinobacillus succinogenes (strain ATCC 55618 / DSM 22257 / CCUG 43843 / 130Z) protein is 3-oxo-tetronate kinase.